The primary structure comprises 235 residues: Segregation and condensation protein A (235 aa).

Belongs to the ScpA family. Component of a cohesin-like complex composed of ScpA, ScpB and the Smc homodimer, in which ScpA and ScpB bind to the head domain of Smc. The presence of the three proteins is required for the association of the complex with DNA.

Its subcellular location is the cytoplasm. In terms of biological role, participates in chromosomal partition during cell division. May act via the formation of a condensin-like complex containing Smc and ScpB that pull DNA away from mid-cell into both cell halves. The chain is Segregation and condensation protein A from Streptococcus uberis (strain ATCC BAA-854 / 0140J).